A 448-amino-acid polypeptide reads, in one-letter code: tRNA wybutosine-synthesizing protein 2 homolog (448 aa).

S-adenosyl-L-methionine is bound by residues S218, K225, E265, and 293–294; that span reads DN.

This sequence belongs to the class I-like SAM-binding methyltransferase superfamily. TRM5/TYW2 family.

It carries out the reaction 4-demethylwyosine(37) in tRNA(Phe) + S-adenosyl-L-methionine = 4-demethyl-7-[(3S)-3-amino-3-carboxypropyl]wyosine(37) in tRNA(Phe) + S-methyl-5'-thioadenosine + H(+). It functions in the pathway tRNA modification; wybutosine-tRNA(Phe) biosynthesis. S-adenosyl-L-methionine-dependent transferase that acts as a component of the wybutosine biosynthesis pathway. Wybutosine is a hyper modified guanosine with a tricyclic base found at the 3'-position adjacent to the anticodon of eukaryotic phenylalanine tRNA. Catalyzes the transfer of the alpha-amino-alpha-carboxypropyl (acp) group from S-adenosyl-L-methionine to the C-7 position of 4-demethylwyosine (imG-14) to produce wybutosine-86. In Macaca fascicularis (Crab-eating macaque), this protein is tRNA wybutosine-synthesizing protein 2 homolog (TRMT12).